A 313-amino-acid chain; its full sequence is MTQWYPASPALWQGRDDSIEAPDARRLFQAITRSEAFSPENWQQKIALMGFACDEGVKRNAGRPGAAGGPDALRKALANMASHQGHERLVDLGNWVAPTPDLEGAQQALRDAVSRCLRAGMRTLVLGGGHETAFGHGAGVLDAFAQESVGIINLDAHLDLRQTDRATSGTPFRQLAQLCDAQSRAFHYACFGVSRAANTQALWREAQWRNVTVVEDLDCHDALAQMTQFIDKVDKIYLTIDLDVLPVWEMPAVSAPAALGVPLIQVLRLIDPVCRSGKLQAADLVEFNPRFDEDGAAARVAARLGWQIAHWWR.

The Mn(2+) site is built by H130, D155, H157, D159, D241, and D243.

It belongs to the arginase family. It depends on Mn(2+) as a cofactor.

The enzyme catalyses N-formimidoyl-L-glutamate + H2O = formamide + L-glutamate. It functions in the pathway amino-acid degradation; L-histidine degradation into L-glutamate; L-glutamate from N-formimidoyl-L-glutamate (hydrolase route): step 1/1. Catalyzes the conversion of N-formimidoyl-L-glutamate to L-glutamate and formamide. This chain is Formimidoylglutamase, found in Salmonella paratyphi A (strain ATCC 9150 / SARB42).